The following is a 129-amino-acid chain: Integration host factor subunit alpha (129 aa).

The segment at 87 to 129 is disordered; sequence SALNGEAPPEDHAEIDAREEAAADAAEARGEDFDEEGMEDMEG. Over residues 95–117 the composition is skewed to basic and acidic residues; it reads PEDHAEIDAREEAAADAAEARGE. The span at 118 to 129 shows a compositional bias: acidic residues; the sequence is DFDEEGMEDMEG.

It belongs to the bacterial histone-like protein family. As to quaternary structure, heterodimer of an alpha and a beta chain.

Its function is as follows. This protein is one of the two subunits of integration host factor, a specific DNA-binding protein that functions in genetic recombination as well as in transcriptional and translational control. It is necessary for normal cell growth and the production of carotenoids in response to light. This Myxococcus xanthus protein is Integration host factor subunit alpha (ihfA).